The primary structure comprises 85 residues: Large ribosomal subunit protein bL27 (85 aa).

A disordered region spans residues 1 to 21 (MAHKKGVGSSKNGRESESKRL).

Belongs to the bacterial ribosomal protein bL27 family.

This is Large ribosomal subunit protein bL27 from Porphyromonas gingivalis (strain ATCC 33277 / DSM 20709 / CIP 103683 / JCM 12257 / NCTC 11834 / 2561).